Reading from the N-terminus, the 1378-residue chain is DNA-directed RNA polymerase subunit beta (1378 aa).

This sequence belongs to the RNA polymerase beta chain family. In terms of assembly, the RNAP catalytic core consists of 2 alpha, 1 beta, 1 beta' and 1 omega subunit. When a sigma factor is associated with the core the holoenzyme is formed, which can initiate transcription.

It catalyses the reaction RNA(n) + a ribonucleoside 5'-triphosphate = RNA(n+1) + diphosphate. Its function is as follows. DNA-dependent RNA polymerase catalyzes the transcription of DNA into RNA using the four ribonucleoside triphosphates as substrates. This chain is DNA-directed RNA polymerase subunit beta, found in Campylobacter jejuni subsp. jejuni serotype O:23/36 (strain 81-176).